We begin with the raw amino-acid sequence, 274 residues long: Large ribosomal subunit protein uL2 (274 aa).

Disordered regions lie at residues glutamine 36–arginine 61 and valine 223–arginine 274. The span at lysine 37 to asparagine 46 shows a compositional bias: polar residues. 2 stretches are compositionally biased toward basic residues: residues threonine 50–arginine 61 and lysine 254–arginine 274.

This sequence belongs to the universal ribosomal protein uL2 family. In terms of assembly, part of the 50S ribosomal subunit. Forms a bridge to the 30S subunit in the 70S ribosome.

One of the primary rRNA binding proteins. Required for association of the 30S and 50S subunits to form the 70S ribosome, for tRNA binding and peptide bond formation. It has been suggested to have peptidyltransferase activity; this is somewhat controversial. Makes several contacts with the 16S rRNA in the 70S ribosome. This Halorhodospira halophila (strain DSM 244 / SL1) (Ectothiorhodospira halophila (strain DSM 244 / SL1)) protein is Large ribosomal subunit protein uL2.